The following is a 500-amino-acid chain: Ribose import ATP-binding protein RbsA (500 aa).

2 consecutive ABC transporter domains span residues leucine 6–lysine 242 and alanine 252–asparagine 495. Residue glycine 38–serine 45 coordinates ATP.

Belongs to the ABC transporter superfamily. Ribose importer (TC 3.A.1.2.1) family. As to quaternary structure, the complex is composed of an ATP-binding protein (RbsA), two transmembrane proteins (RbsC) and a solute-binding protein (RbsB).

The protein localises to the cell inner membrane. The enzyme catalyses D-ribose(out) + ATP + H2O = D-ribose(in) + ADP + phosphate + H(+). Functionally, part of the ABC transporter complex RbsABC involved in ribose import. Responsible for energy coupling to the transport system. The polypeptide is Ribose import ATP-binding protein RbsA (Vibrio cholerae serotype O1 (strain ATCC 39315 / El Tor Inaba N16961)).